A 389-amino-acid chain; its full sequence is Pyruvylated Gal-beta-1,3-epitope synthesis protein 2 (389 aa).

The Cytoplasmic portion of the chain corresponds to methionine 1–leucine 16. A helical transmembrane segment spans residues leucine 17–isoleucine 37. At glutamine 38 to alanine 389 the chain is on the lumenal side.

Its subcellular location is the endoplasmic reticulum membrane. It is found in the golgi apparatus membrane. In terms of biological role, involved in cell wall biogenesis. Has a role in the addition of Gal-beta1,3 moeities to galactomannans and their subsequent pyruvylation. Has a role in meiosis. This chain is Pyruvylated Gal-beta-1,3-epitope synthesis protein 2 (pvg2), found in Schizosaccharomyces pombe (strain 972 / ATCC 24843) (Fission yeast).